Here is a 95-residue protein sequence, read N- to C-terminus: Aspartyl/glutamyl-tRNA(Asn/Gln) amidotransferase subunit C (95 aa).

The protein belongs to the GatC family. As to quaternary structure, heterotrimer of A, B and C subunits.

It catalyses the reaction L-glutamyl-tRNA(Gln) + L-glutamine + ATP + H2O = L-glutaminyl-tRNA(Gln) + L-glutamate + ADP + phosphate + H(+). It carries out the reaction L-aspartyl-tRNA(Asn) + L-glutamine + ATP + H2O = L-asparaginyl-tRNA(Asn) + L-glutamate + ADP + phosphate + 2 H(+). In terms of biological role, allows the formation of correctly charged Asn-tRNA(Asn) or Gln-tRNA(Gln) through the transamidation of misacylated Asp-tRNA(Asn) or Glu-tRNA(Gln) in organisms which lack either or both of asparaginyl-tRNA or glutaminyl-tRNA synthetases. The reaction takes place in the presence of glutamine and ATP through an activated phospho-Asp-tRNA(Asn) or phospho-Glu-tRNA(Gln). This chain is Aspartyl/glutamyl-tRNA(Asn/Gln) amidotransferase subunit C, found in Dehalococcoides mccartyi (strain CBDB1).